The following is a 162-amino-acid chain: Probable chemoreceptor glutamine deamidase CheD (162 aa).

Belongs to the CheD family.

The enzyme catalyses L-glutaminyl-[protein] + H2O = L-glutamyl-[protein] + NH4(+). In terms of biological role, probably deamidates glutamine residues to glutamate on methyl-accepting chemotaxis receptors (MCPs), playing an important role in chemotaxis. The chain is Probable chemoreceptor glutamine deamidase CheD from Clostridium novyi (strain NT).